The primary structure comprises 457 residues: Aromatic amino acid transport protein AroP (457 aa).

Topologically, residues 1 to 20 (MMDSQQHGEQLKRGLKNRHI) are cytoplasmic. The chain crosses the membrane as a helical span at residues 21–41 (QLIALGGAIGTGLFLGSASVI). Residue Gln42 is a topological domain, periplasmic. A helical transmembrane segment spans residues 43–63 (SAGPGIILGYAIAGFIAFLIM). The Cytoplasmic portion of the chain corresponds to 64-86 (RQLGEMVVEEPVAGSFSHFAYKY). Residues 87–107 (WGGFAGFASGWNYWVLYVLVA) traverse the membrane as a helical segment. Residues 108-117 (MAELTAVGKY) are Periplasmic-facing. A helical transmembrane segment spans residues 118-138 (IQFWYPEIPTWASAAAFFVII). Residues 139 to 155 (NAINLTNVKVFGEMEFW) lie on the Cytoplasmic side of the membrane. The chain crosses the membrane as a helical span at residues 156 to 176 (FAIIKVIAVIAMILFGAWLLF). Over 177-201 (SDTAGPQATVRNLWEQGGFLPHGWT) the chain is Periplasmic. The chain crosses the membrane as a helical span at residues 202–222 (GLVMMMAIIMFSFGGLELVGI). Topologically, residues 223–240 (TAAEADNPEQSIPKATNQ) are cytoplasmic. Residues 241–261 (VIYRILIFYIGSLAVLLSLLP) traverse the membrane as a helical segment. Residues 262–271 (WTRVTADTSP) are Periplasmic-facing. A helical transmembrane segment spans residues 272–292 (FVLIFHELGDTFVANALNIVV). Residues 293-333 (LTAALSVYNSCVYCNSRMLFGLAQQGNAPKALLNVDKRGVP) are Cytoplasmic-facing. A helical membrane pass occupies residues 334-354 (VSSILVSAVVTALCVLLNYLA). At 355 to 358 (PESA) the chain is on the periplasmic side. The chain crosses the membrane as a helical span at residues 359 to 379 (FGLLMALVVSALVINWAMISL). The Cytoplasmic segment spans residues 380–400 (AHMMFRRAKQQQGVKTRFPAL). A helical transmembrane segment spans residues 401–421 (FYPFGNVLCLLFMAAVLIIML). Residues 422–425 (MTPG) are Periplasmic-facing. The helical transmembrane segment at 426 to 446 (MAISVWLIPVWLLILGVGYLC) threads the bilayer. At 447–457 (KEKTAKTVKAH) the chain is on the cytoplasmic side.

It belongs to the amino acid-polyamine-organocation (APC) superfamily. Amino acid transporter (AAT) (TC 2.A.3.1) family.

Its subcellular location is the cell inner membrane. It catalyses the reaction L-phenylalanine(in) + H(+)(in) = L-phenylalanine(out) + H(+)(out). It carries out the reaction L-tryptophan(in) + H(+)(in) = L-tryptophan(out) + H(+)(out). The catalysed reaction is L-tyrosine(in) + H(+)(in) = L-tyrosine(out) + H(+)(out). Permease that is involved in the active transport across the cytoplasmic membrane of all three aromatic amino acids, phenylalanine, tyrosine and tryptophan. The sequence is that of Aromatic amino acid transport protein AroP (aroP) from Salmonella typhi.